A 281-amino-acid chain; its full sequence is Lectin alpha chain (281 aa).

Asn35, Asn82, and Asn140 each carry an N-linked (GlcNAc...) asparagine glycan.

This sequence belongs to the leguminous lectin family. In terms of assembly, tetramer of 2 alpha and 2 beta chains. Glycosylated. In terms of processing, the beta chain is produced by partial proteolytic processing of the alpha chain.

In terms of biological role, D-galactose-binding lectin. The protein is Lectin alpha chain of Lablab purpureus (Hyacinth bean).